Here is a 106-residue protein sequence, read N- to C-terminus: Urease subunit beta (106 aa).

Belongs to the urease beta subunit family. Heterotrimer of UreA (gamma), UreB (beta) and UreC (alpha) subunits. Three heterotrimers associate to form the active enzyme.

The protein localises to the cytoplasm. The catalysed reaction is urea + 2 H2O + H(+) = hydrogencarbonate + 2 NH4(+). It functions in the pathway nitrogen metabolism; urea degradation; CO(2) and NH(3) from urea (urease route): step 1/1. The sequence is that of Urease subunit beta from Prochlorococcus marinus (strain NATL1A).